Reading from the N-terminus, the 1781-residue chain is MARRMSMYSMASEAMGGPQAPQQMSTTTLLNAIHNIYLSSQPYQIDAGTSLVVNTWLTAAQAGATVDATLAARAWEHARRRAEDGCVVLGSLHQATPSLLVPFLNTFPFAIPASIYKSLEAVQPFLRCVTPYNASAPRQIALGVTLTLSLGGSVTGASLALSQGGIDTENGLLNVPAEAGYRAFDVFYYLLTSASTPAEREFLGLKAPSAYALLARSGTYEPPSYLITADDGAAADDFRQALKEIGIKGSVHRNFISTLAGLLKLGNTLDYDADSDDFEEICEDVSGLLGMEPEVLMQQLSTEDRRTLVAGLYEALVDWVISKANAAIAAQMLRIRDGDESVDGRGVRTPNENEDGDTVSITVVEVPEPALGRALAMRTIFDDTLGINAEMIEDGVEIHPASSSVVREMQQAVADVAPDLGIMTGPQGRDRQHDIEKREVILEKAAYASEEDSFLKKLLFPVEGQGINLGRTGRFDLPGLLSSSRAWFHLALHPTDDSPANLATLPAITSAWSAGTISRQLRSWRLPEWANRRNRSLDYTADFDVDEFVGRYGALGCKDGKDGIETWMLERGWSNGEVFIGKERIWVREGPWWEAESMLDIKPAHSLQSIGQNPFTSGFDTSYSANPPNGSGFFPAPAMDNSMNGSNDQLMHTRNFSQGNMSQATFNQHPHLNPQSAPSIAPSAMRNAQPATGDYGLGNKGDTYKGQVFYNDDGDFTGKLDGDLAKDKKIETKPLTFGRRAWVAFVWALTFWIPSPLLKFVGRMRRPDVRMAWREKLVLFFIILLLNGLIIFWIIGFGKLLCPNANKAWNVKEVAGHAEDEDAFWVAIFGKVYDITDFWRQQHSDTSIKTTKTNMLPLAGMVMDNYFMPPLNRACRGLGIKETVQLTFNETITNPLAQHVSGFYTRDRTSALHNADWFWTTFQPKIKEYYHGDLVWKEGTVKSQGSGSEQHPWVMYGNQIYDLTDYLHTLDVNDNFDTYKFLNEDMVNLWKNSPGTNIKKDLDLLISNAKNETVAANLKNSWQCIQNIAYKGIVDFRDSPRCRVNNWLLLAFAIIICIVTAVKFLAALQFGSKRRPSPQDKFVICQVPVYTEGEDSLRKALDSLTALQYDNKRKLICVICDGVVVGEGNDRPTPKIVLDILGVDPKVDPPALPFKSVGNSAEQLNYGKVYSGLYEFEGNVVPYIVVVKVGKESEQTKSKPGNRGKRDSQILLMSFLNRVHHRAPMSPLELEMFHQVNNIIGVDPELYEYLLMIDADTCVEEDALNRLVAACAHDAKIAGICGETALENDEKTWWTMIQVYEYFISHHLAKAFESLFGSVTCLPGCFTMYRLRSVDKGKPLIISDGVIKDYSVCDVDTLHKKNLLSLGEDRYLTTLMTKYFPEMSYKFIPDAQCKTAAPESWSVLLSQRRRWINSTIHNLVELMQLKELCGFCCFSMRFVVFIDLTGTIILPSTTVYIGYLIYVLATGTGPIPYISLAMIGAVYGHQALIFILKRQWQHIGWMIIYILAFPIYSFILPLYSFWNQDNFSWGNTRIVIGEKGDKQVVAVDDEGFDPRSIPLQRWDDYAMANNLPGRRGGYQEKTDYSYGDNYELDEIKSVYSAGPQGSVLTGMPGRNTYMPPSPAFNNGRTSTMGFQESPMQHRQSMMSMGTGVHDMRSQSPYQDYPGQHPGVANLRGQANLSPAAGGGHSRSGTALGFSSGSRSPMPDAMRSQSSFDFQHGQGGPTDMAIVESIRSVLCEVDLDTVTKKQVRALVEQRLQTELVGERRTFMDRQIDHELENM.

6 N-linked (GlcNAc...) asparagine glycosylation sites follow: Asn133, Asn534, Asn629, Asn644, Asn655, and Asn660. Transmembrane regions (helical) follow at residues 741 to 761 (AWVA…LKFV) and 777 to 797 (LVLF…IIGF). 2 N-linked (GlcNAc...) asparagine glycosylation sites follow: Asn889 and Asn1011. A helical transmembrane segment spans residues 1048–1068 (LLLAFAIIICIVTAVKFLAAL). Residue Asn1413 is glycosylated (N-linked (GlcNAc...) asparagine). 3 helical membrane passes run 1444–1464 (LTGT…IYVL), 1471–1491 (IPYI…LIFI), and 1499–1519 (IGWM…LPLY). Asn1526 carries an N-linked (GlcNAc...) asparagine glycan. A disordered region spans residues 1677–1712 (QANLSPAAGGGHSRSGTALGFSSGSRSPMPDAMRSQ). Positions 1690–1702 (RSGTALGFSSGSR) are enriched in polar residues. The region spanning 1723–1779 (GPTDMAIVESIRSVLCEVDLDTVTKKQVRALVEQRLQTELVGERRTFMDRQIDHELE) is the DEK-C domain.

This sequence belongs to the chitin synthase family. Class V subfamily.

The protein localises to the cell membrane. It carries out the reaction [(1-&gt;4)-N-acetyl-beta-D-glucosaminyl](n) + UDP-N-acetyl-alpha-D-glucosamine = [(1-&gt;4)-N-acetyl-beta-D-glucosaminyl](n+1) + UDP + H(+). Its function is as follows. Polymerizes chitin, a structural polymer of the cell wall and septum, by transferring the sugar moiety of UDP-GlcNAc to the non-reducing end of the growing chitin polymer. Shows additive effects in septum formation with CHS1, CHS2, CHS3A, CHS4, CHS5 and CHS6. Indispensable for perithecia formation and regulates conidiation. Plays an important role in the response to cell wall stress. Also required for hyphal growth and pathogenicity. This is Chitin synthase 7 from Gibberella zeae (strain ATCC MYA-4620 / CBS 123657 / FGSC 9075 / NRRL 31084 / PH-1) (Wheat head blight fungus).